We begin with the raw amino-acid sequence, 405 residues long: Argininosuccinate synthase (405 aa).

ATP contacts are provided by residues 13 to 21 and Ala40; that span reads AYSGGLDTS. Positions 91 and 96 each coordinate L-citrulline. An ATP-binding site is contributed by Gly121. L-aspartate-binding residues include Thr123, Asn127, and Asp128. Residue Asn127 participates in L-citrulline binding. L-citrulline contacts are provided by Arg131, Ser182, Ser191, Glu267, and Tyr279.

This sequence belongs to the argininosuccinate synthase family. Type 1 subfamily. Homotetramer.

Its subcellular location is the cytoplasm. The catalysed reaction is L-citrulline + L-aspartate + ATP = 2-(N(omega)-L-arginino)succinate + AMP + diphosphate + H(+). It participates in amino-acid biosynthesis; L-arginine biosynthesis; L-arginine from L-ornithine and carbamoyl phosphate: step 2/3. The protein is Argininosuccinate synthase of Rhizobium meliloti (strain 1021) (Ensifer meliloti).